A 344-amino-acid polypeptide reads, in one-letter code: Phosphoribosylformylglycinamidine cyclo-ligase (344 aa).

This sequence belongs to the AIR synthase family.

It localises to the cytoplasm. It catalyses the reaction 2-formamido-N(1)-(5-O-phospho-beta-D-ribosyl)acetamidine + ATP = 5-amino-1-(5-phospho-beta-D-ribosyl)imidazole + ADP + phosphate + H(+). It functions in the pathway purine metabolism; IMP biosynthesis via de novo pathway; 5-amino-1-(5-phospho-D-ribosyl)imidazole from N(2)-formyl-N(1)-(5-phospho-D-ribosyl)glycinamide: step 2/2. The protein is Phosphoribosylformylglycinamidine cyclo-ligase of Glaesserella parasuis serovar 5 (strain SH0165) (Haemophilus parasuis).